Consider the following 458-residue polypeptide: Siroheme synthase (458 aa).

The precorrin-2 dehydrogenase /sirohydrochlorin ferrochelatase stretch occupies residues 1–203 (MDYLPLFFDL…GNLAAAEQLI (203 aa)). NAD(+) contacts are provided by residues 22-23 (TI) and 43-44 (PK). Ser128 carries the post-translational modification Phosphoserine. The tract at residues 216–458 (GEVYLVGAGP…RCHEKLNWYK (243 aa)) is uroporphyrinogen-III C-methyltransferase. Pro225 provides a ligand contact to S-adenosyl-L-methionine. Asp248 (proton acceptor) is an active-site residue. Catalysis depends on Lys270, which acts as the Proton donor. S-adenosyl-L-methionine-binding positions include 301–303 (GGD), Ile306, 331–332 (TA), Met383, and Gly412.

In the N-terminal section; belongs to the precorrin-2 dehydrogenase / sirohydrochlorin ferrochelatase family. It in the C-terminal section; belongs to the precorrin methyltransferase family.

The enzyme catalyses uroporphyrinogen III + 2 S-adenosyl-L-methionine = precorrin-2 + 2 S-adenosyl-L-homocysteine + H(+). It catalyses the reaction precorrin-2 + NAD(+) = sirohydrochlorin + NADH + 2 H(+). It carries out the reaction siroheme + 2 H(+) = sirohydrochlorin + Fe(2+). It participates in cofactor biosynthesis; adenosylcobalamin biosynthesis; precorrin-2 from uroporphyrinogen III: step 1/1. The protein operates within cofactor biosynthesis; adenosylcobalamin biosynthesis; sirohydrochlorin from precorrin-2: step 1/1. Its pathway is porphyrin-containing compound metabolism; siroheme biosynthesis; precorrin-2 from uroporphyrinogen III: step 1/1. It functions in the pathway porphyrin-containing compound metabolism; siroheme biosynthesis; siroheme from sirohydrochlorin: step 1/1. It participates in porphyrin-containing compound metabolism; siroheme biosynthesis; sirohydrochlorin from precorrin-2: step 1/1. In terms of biological role, multifunctional enzyme that catalyzes the SAM-dependent methylations of uroporphyrinogen III at position C-2 and C-7 to form precorrin-2 via precorrin-1. Then it catalyzes the NAD-dependent ring dehydrogenation of precorrin-2 to yield sirohydrochlorin. Finally, it catalyzes the ferrochelation of sirohydrochlorin to yield siroheme. The polypeptide is Siroheme synthase (Saccharophagus degradans (strain 2-40 / ATCC 43961 / DSM 17024)).